Consider the following 312-residue polypeptide: Protein ABIL2 (312 aa).

The tract at residues 173 to 287 (TIRETPPPPV…TEQQQPSKSK (115 aa)) is disordered. Positions 183–199 (RKSTSQSSSPRQPPQRS) are enriched in low complexity. The segment covering 230–251 (SVATRKSASISRPTTPSKSRSI) has biased composition (polar residues). A compositionally biased stretch (basic and acidic residues) spans 269–279 (AFEKDNQKETE).

It belongs to the ABI family. As to quaternary structure, binds SCAR.

Its subcellular location is the cytoplasm. The protein resides in the cytoskeleton. Functionally, involved in regulation of actin and microtubule organization. Part of a WAVE complex that activates the Arp2/3 complex. This Arabidopsis thaliana (Mouse-ear cress) protein is Protein ABIL2 (ABIL2).